A 276-amino-acid chain; its full sequence is Shikimate dehydrogenase (NADP(+)) (276 aa).

Shikimate is bound by residues 15–17 (SMS) and Thr63. Lys67 functions as the Proton acceptor in the catalytic mechanism. Asp79 contributes to the NADP(+) binding site. Asn88 and Asp103 together coordinate shikimate. NADP(+) contacts are provided by residues 130–134 (GAGGA), 154–159 (NRTLSR), and Ile217. Tyr219 contributes to the shikimate binding site. Residue Gly240 coordinates NADP(+).

It belongs to the shikimate dehydrogenase family. In terms of assembly, homodimer.

It carries out the reaction shikimate + NADP(+) = 3-dehydroshikimate + NADPH + H(+). Its pathway is metabolic intermediate biosynthesis; chorismate biosynthesis; chorismate from D-erythrose 4-phosphate and phosphoenolpyruvate: step 4/7. Functionally, involved in the biosynthesis of the chorismate, which leads to the biosynthesis of aromatic amino acids. Catalyzes the reversible NADPH linked reduction of 3-dehydroshikimate (DHSA) to yield shikimate (SA). This chain is Shikimate dehydrogenase (NADP(+)), found in Oceanobacillus iheyensis (strain DSM 14371 / CIP 107618 / JCM 11309 / KCTC 3954 / HTE831).